The primary structure comprises 157 residues: Subgroup A Rous sarcoma virus receptor pg950 (157 aa).

The first 19 residues, Met-1–Gly-19, serve as a signal peptide directing secretion. Asn-20 and Asn-24 each carry an N-linked (GlcNAc...) asparagine glycan. Residues Asn-20–Arg-102 lie on the Extracellular side of the membrane. Residues Ser-28–Thr-71 enclose the LDL-receptor class A domain. Cystine bridges form between Cys-30–Cys-47, Cys-37–Cys-60, and Cys-54–Cys-69. Residue Asn-81 is glycosylated (N-linked (GlcNAc...) asparagine). Residues Met-103 to Gly-125 form a helical membrane-spanning segment. At Lys-126 to Ser-157 the chain is on the cytoplasmic side.

(Microbial infection) Interacts with Rous sarcoma virus envelope protein; this interaction allows the viral attachment.

The protein resides in the membrane. Responsible for susceptibility to the retrovirus subgroup A Rous sarcoma virus. The protein is Subgroup A Rous sarcoma virus receptor pg950 of Coturnix japonica (Japanese quail).